A 356-amino-acid polypeptide reads, in one-letter code: MAHKLLIINPGSTSTKIGVFEDENLIFEETLRHSAEEIGKYSNVYEQFPFRKEVILNVLKEKGFDINTLDAIVGRGGLLKPVEGGTYEVNDAMLKDLRESVRGEHASNLGGIIGNEIAKSLNIPAFIVDPVVVDELQDIARISGMPEIERTSIFHALNQKAVARRYAKENNKSYEDVNIVVVHMGGGSSVGAHKNGKIIDVNNALDGEGPFSPERSGGVPIGDLVRLCYSGKYTLDEIIKKINGKGGAVAYLGTNDFREVEEKALAGDEKYKLILDAFIYQISKEIGKCSVVLEGNVDAIVLTGGIAYSKYVTKEIENKVKFIAPVVLYPGEDELLALTQGGLRVLNGEEKAKEYK.

This sequence belongs to the acetokinase family.

Its subcellular location is the cytoplasm. The catalysed reaction is butanoate + ATP = butanoyl phosphate + ADP. The protein operates within lipid metabolism; butanoate metabolism. Its function is as follows. Catalyzes the conversion of butyryl-CoA through butyryl phosphate to butyrate. The protein is Butyrate kinase of Clostridium tetani (strain Massachusetts / E88).